A 1103-amino-acid polypeptide reads, in one-letter code: Voltage-dependent calcium channel subunit alpha-2/delta-1 (1103 aa).

Positions 1–24 (MAAGCLLALTLTLFQSLLIGPSSE) are cleaved as a signal peptide. Topologically, residues 25–1073 (EPFPSAVTIK…VLEDYTDCGG (1049 aa)) are extracellular. An N-linked (GlcNAc...) asparagine glycan is attached at asparagine 92. Position 119 is a phosphoserine (serine 119). 2 N-linked (GlcNAc...) asparagine glycosylation sites follow: asparagine 136 and asparagine 184. Residues 253 to 430 (DMLILVDVSG…INTQEYLDVL (178 aa)) enclose the VWFA domain. A divalent metal cation-binding residues include aspartate 259, serine 261, and serine 263. An MIDAS-like motif motif is present at residues 259 to 263 (DVSGS). N-linked (GlcNAc...) asparagine glycans are attached at residues asparagine 324, asparagine 348, asparagine 468, asparagine 475, asparagine 604, asparagine 613, asparagine 675, asparagine 781, asparagine 824, asparagine 888, asparagine 895, asparagine 985, and asparagine 998. A disulfide bond links cysteine 404 and cysteine 1059. A Cache domain is found at 446–556 (WTNVYLDALE…NIQNPKSQEP (111 aa)). A helical transmembrane segment spans residues 1074-1094 (VSGLNPSLWYIIGIQFLLLWL). The Cytoplasmic portion of the chain corresponds to 1095–1103 (VSGSTHRLL).

It belongs to the calcium channel subunit alpha-2/delta family. Dimer formed of alpha-2-1 and delta-1 chains; disulfide-linked. Voltage-dependent calcium channels are multisubunit complexes, consisting of alpha-1 (CACNA1), alpha-2 (CACNA2D), beta (CACNB) and delta (CACNA2D) subunits in a 1:1:1:1 ratio. Post-translationally, proteolytically processed into subunits alpha-2-1 and delta-1 that are disulfide-linked. In terms of tissue distribution, isoform 1 is expressed in skeletal muscle. Isoform 2 is expressed in the central nervous system. Isoform 2, isoform 4 and isoform 5 are expressed in neuroblastoma cells. Isoform 3, isoform 4 and isoform 5 are expressed in the aorta.

Its subcellular location is the membrane. The protein resides in the cell membrane. The alpha-2/delta subunit of voltage-dependent calcium channels regulates calcium current density and activation/inactivation kinetics of the calcium channel. Plays an important role in excitation-contraction coupling. The protein is Voltage-dependent calcium channel subunit alpha-2/delta-1 (CACNA2D1) of Homo sapiens (Human).